A 101-amino-acid polypeptide reads, in one-letter code: Protein Tat (101 aa).

Positions Met1–Asn24 are interaction with human CREBBP. The interval Met1–Gly48 is transactivation. Zn(2+) is bound by residues Cys22, Cys25, and Cys27. A cysteine-rich region spans residues Cys22–Cys37. The residue at position 28 (Lys28) is an N6-acetyllysine; by host PCAF. Residues Cys30, His33, Cys34, and Cys37 each coordinate Zn(2+). The interval Phe38–Gly48 is core. The span at Gly48–Arg57 shows a compositional bias: basic residues. The segment at Gly48–His101 is disordered. The short motif at Arg49–Arg57 is the Nuclear localization signal, RNA-binding (TAR), and protein transduction element. The interaction with the host capping enzyme RNGTT stretch occupies residues Arg49–Glu86. Lys50 and Lys51 each carry N6-acetyllysine; by host EP300 and GCN5L2. Asymmetric dimethylarginine; by host PRMT6 occurs at positions 52 and 53. Lys71 participates in a covalent cross-link: Glycyl lysine isopeptide (Lys-Gly) (interchain with G-Cter in ubiquitin). A compositionally biased stretch (basic and acidic residues) spans Gly83–His101.

This sequence belongs to the lentiviruses Tat family. In terms of assembly, interacts with host CCNT1. Associates with the P-TEFb complex composed at least of Tat, P-TEFb (CDK9 and CCNT1), TAR RNA, RNA Pol II. Recruits the HATs CREBBP, TAF1/TFIID, EP300, PCAF and GCN5L2. Interacts with host KAT5/Tip60; this interaction targets the latter to degradation. Interacts with the host deacetylase SIRT1. Interacts with host capping enzyme RNGTT; this interaction stimulates RNGTT. Binds to host KDR, and to the host integrins ITGAV/ITGB3 and ITGA5/ITGB1. Interacts with host KPNB1/importin beta-1 without previous binding to KPNA1/importin alpha-1. Interacts with EIF2AK2. Interacts with host nucleosome assembly protein NAP1L1; this interaction may be required for the transport of Tat within the nucleus, since the two proteins interact at the nuclear rim. Interacts with host C1QBP/SF2P32; this interaction involves lysine-acetylated Tat. Interacts with the host chemokine receptors CCR2, CCR3 and CXCR4. Interacts with host DPP4/CD26; this interaction may trigger an anti-proliferative effect. Interacts with host LDLR. Interacts with the host extracellular matrix metalloproteinase MMP1. Interacts with host PRMT6; this interaction mediates Tat's methylation. Interacts with, and is ubiquitinated by MDM2/Hdm2. Interacts with host PSMC3 and HTATIP2. Interacts with STAB1; this interaction may overcome SATB1-mediated repression of IL2 and IL2RA (interleukin) in T cells by binding to the same domain than HDAC1. Interacts (when acetylated) with human CDK13, thereby increasing HIV-1 mRNA splicing and promoting the production of the doubly spliced HIV-1 protein Nef. Interacts with host TBP; this interaction modulates the activity of transcriptional pre-initiation complex. Interacts with host RELA. Interacts with host PLSCR1; this interaction negatively regulates Tat transactivation activity by altering its subcellular distribution. Asymmetrical arginine methylation by host PRMT6 seems to diminish the transactivation capacity of Tat and affects the interaction with host CCNT1. Post-translationally, acetylation by EP300, CREBBP, GCN5L2/GCN5 and PCAF regulates the transactivation activity of Tat. EP300-mediated acetylation of Lys-50 promotes dissociation of Tat from the TAR RNA through the competitive binding to PCAF's bromodomain. In addition, the non-acetylated Tat's N-terminus can also interact with PCAF. PCAF-mediated acetylation of Lys-28 enhances Tat's binding to CCNT1. Lys-50 is deacetylated by SIRT1. In terms of processing, polyubiquitination by host MDM2 does not target Tat to degradation, but activates its transactivation function and fosters interaction with CCNT1 and TAR RNA. Phosphorylated by EIF2AK2 on serine and threonine residues adjacent to the basic region important for TAR RNA binding and function. Phosphorylation of Tat by EIF2AK2 is dependent on the prior activation of EIF2AK2 by dsRNA.

It is found in the host nucleus. The protein resides in the host nucleolus. The protein localises to the host cytoplasm. Its subcellular location is the secreted. In terms of biological role, transcriptional activator that increases RNA Pol II processivity, thereby increasing the level of full-length viral transcripts. Recognizes a hairpin structure at the 5'-LTR of the nascent viral mRNAs referred to as the transactivation responsive RNA element (TAR) and recruits the cyclin T1-CDK9 complex (P-TEFb complex) that will in turn hyperphosphorylate the RNA polymerase II to allow efficient elongation. The CDK9 component of P-TEFb and other Tat-activated kinases hyperphosphorylate the C-terminus of RNA Pol II that becomes stabilized and much more processive. Other factors such as HTATSF1/Tat-SF1, SUPT5H/SPT5, and HTATIP2 are also important for Tat's function. Besides its effect on RNA Pol II processivity, Tat induces chromatin remodeling of proviral genes by recruiting the histone acetyltransferases (HATs) CREBBP, EP300 and PCAF to the chromatin. This also contributes to the increase in proviral transcription rate, especially when the provirus integrates in transcriptionally silent region of the host genome. To ensure maximal activation of the LTR, Tat mediates nuclear translocation of NF-kappa-B by interacting with host RELA. Through its interaction with host TBP, Tat may also modulate transcription initiation. Tat can reactivate a latently infected cell by penetrating in it and transactivating its LTR promoter. In the cytoplasm, Tat is thought to act as a translational activator of HIV-1 mRNAs. Extracellular circulating Tat can be endocytosed by surrounding uninfected cells via the binding to several surface receptors such as CD26, CXCR4, heparan sulfate proteoglycans (HSPG) or LDLR. Neurons are rarely infected, but they internalize Tat via their LDLR. Through its interaction with nuclear HATs, Tat is potentially able to control the acetylation-dependent cellular gene expression. Modulates the expression of many cellular genes involved in cell survival, proliferation or in coding for cytokines or cytokine receptors. Tat plays a role in T-cell and neurons apoptosis. Tat induced neurotoxicity and apoptosis probably contribute to neuroAIDS. Circulating Tat also acts as a chemokine-like and/or growth factor-like molecule that binds to specific receptors on the surface of the cells, affecting many cellular pathways. In the vascular system, Tat binds to ITGAV/ITGB3 and ITGA5/ITGB1 integrins dimers at the surface of endothelial cells and competes with bFGF for heparin-binding sites, leading to an excess of soluble bFGF. The chain is Protein Tat from Human immunodeficiency virus type 1 group M subtype B (isolate SF162) (HIV-1).